A 95-amino-acid chain; its full sequence is Alpha-conotoxin-like Ms20.4 (95 aa).

The N-terminal stretch at 1 to 24 (MPKLAVVLLVLLILPLSYFDVAGG) is a signal peptide. The propeptide occupies 25–45 (QAAEGDRRGNGLARYPQRGGR). The residue at position 50 (Glu50) is a 4-carboxyglutamate. Pro56 carries the post-translational modification 4-hydroxyproline. 4 cysteine pairs are disulfide-bonded: Cys64–Cys73, Cys69–Cys81, Cys74–Cys91, and Cys79–Cys93.

Belongs to the conotoxin D superfamily. As to quaternary structure, hetero-, homo- or pseudo-homodimer (identical sequence, different post-translational modifications). Heterodimer of [carboxy'Glu-48', hydroxy'Pro-54']Ms20.1 and [carboxyGlu-50, hydroxyPro-56]Ms20.4 may exist. In terms of tissue distribution, expressed by the venom duct.

It is found in the secreted. Its function is as follows. Alpha-conotoxins act on postsynaptic membranes, they bind to the nicotinic acetylcholine receptors (nAChR) and thus inhibit them. Through its two C-terminal domains, this homodimeric protein would bind to two nAChR allosteric sites, located outside the nAChR C-loop of the principal binding face and at the adjacent binding interface in a clockwise direction. This toxin specifically blocks mammalian neuronal nAChR of the alpha-7/CHRNA7, alpha-3-beta-2/CHRNA3-CHRNB2 and alpha-4-beta-2/CHRNA4-CHRNB2 subtypes. The chain is Alpha-conotoxin-like Ms20.4 from Conus mustelinus (Weasel cone).